A 607-amino-acid polypeptide reads, in one-letter code: All-trans-retinol 13,14-reductase (607 aa).

The first 22 residues, 1–22 (MWFAVVAIFLALVAFLYRYVVG), serve as a signal peptide directing secretion.

This sequence belongs to the carotenoid/retinoid oxidoreductase family. CrtISO subfamily. It depends on NAD(+) as a cofactor. Requires NADP(+) as cofactor. The cofactor is FAD.

It localises to the endoplasmic reticulum membrane. It catalyses the reaction all-trans-13,14-dihydroretinol + A = all-trans-retinol + AH2. In terms of biological role, catalyzes the saturation of all-trans-retinol to all-trans-13,14-dihydroretinol. In addition, saturates the 7-8 double bond of all-trans-retinol to produce all-trans-7,8-dihydroretinol. Can also use vitamin A2 (all-trans-3,4-didehydroretinol) as a substrate, to produce all-trans-13,14-dihydro-3,4-didehydroretinol or all-trans-7,8-dihydro-3,4-didehydroretinol. May play a role in vitamin A metabolism. The protein is All-trans-retinol 13,14-reductase of Danio rerio (Zebrafish).